The primary structure comprises 143 residues: Large ribosomal subunit protein uL11 (143 aa).

Belongs to the universal ribosomal protein uL11 family. As to quaternary structure, part of the ribosomal stalk of the 50S ribosomal subunit. Interacts with L10 and the large rRNA to form the base of the stalk. L10 forms an elongated spine to which L12 dimers bind in a sequential fashion forming a multimeric L10(L12)X complex. Post-translationally, one or more lysine residues are methylated.

Functionally, forms part of the ribosomal stalk which helps the ribosome interact with GTP-bound translation factors. In Laribacter hongkongensis (strain HLHK9), this protein is Large ribosomal subunit protein uL11.